Consider the following 365-residue polypeptide: Aminomethyltransferase (365 aa).

It belongs to the GcvT family. As to quaternary structure, the glycine cleavage system is composed of four proteins: P, T, L and H.

The catalysed reaction is N(6)-[(R)-S(8)-aminomethyldihydrolipoyl]-L-lysyl-[protein] + (6S)-5,6,7,8-tetrahydrofolate = N(6)-[(R)-dihydrolipoyl]-L-lysyl-[protein] + (6R)-5,10-methylene-5,6,7,8-tetrahydrofolate + NH4(+). Functionally, the glycine cleavage system catalyzes the degradation of glycine. This chain is Aminomethyltransferase, found in Aeromonas hydrophila subsp. hydrophila (strain ATCC 7966 / DSM 30187 / BCRC 13018 / CCUG 14551 / JCM 1027 / KCTC 2358 / NCIMB 9240 / NCTC 8049).